The sequence spans 636 residues: Polyglycine hydrolase (636 aa).

The signal sequence occupies residues 1–22; that stretch reads MHSLSLRRLLTSVLSLCSCSSA. N-linked (GlcNAc...) asparagine glycans are attached at residues Asn-30 and Asn-151. Cys-141 and Cys-175 form a disulfide bridge. Ser-363 is a catalytic residue. N-linked (GlcNAc...) asparagine glycans are attached at residues Asn-383 and Asn-481. A disordered region spans residues 512–540; the sequence is TEDRIVQESKNTGQDPVHPQSAKLVPGPH.

Belongs to the peptidase S12 family.

The protein resides in the secreted. It catalyses the reaction a glycyl-glycyl-[protein] + H2O = N-terminal glycyl-[protein] + [protein]-C-terminal glycine. In terms of biological role, serine-type endopeptidase that cleaves Gly-Gly bonds in the polyglycine linker of host plant class IV chitinases to disrupt their chitin-binding, and thereby plays a role in lowering the defense responses of the host to the fungus. Degrades Z.mays Endochitinase A (CHIA) in vitro, although corn is not its host species. The sequence is that of Polyglycine hydrolase from Fusarium vanettenii (strain ATCC MYA-4622 / CBS 123669 / FGSC 9596 / NRRL 45880 / 77-13-4) (Fusarium solani subsp. pisi).